Here is a 66-residue protein sequence, read N- to C-terminus: Large ribosomal subunit protein uL29 (66 aa).

Belongs to the universal ribosomal protein uL29 family.

The sequence is that of Large ribosomal subunit protein uL29 from Borreliella afzelii (strain PKo) (Borrelia afzelii).